A 157-amino-acid polypeptide reads, in one-letter code: UPF0251 protein CLD_3165 (157 aa).

The protein belongs to the UPF0251 family.

The chain is UPF0251 protein CLD_3165 from Clostridium botulinum (strain Okra / Type B1).